The sequence spans 106 residues: uncharacterized protein (106 aa).

The protein resides in the mitochondrion. This is an uncharacterized protein from Arabidopsis thaliana (Mouse-ear cress).